A 64-amino-acid polypeptide reads, in one-letter code: Alpha-mammal toxin BmK-M8 (64 aa).

The LCN-type CS-alpha/beta domain maps to 2 to 64 (RDAYIADSEN…ERIKEPGKCG (63 aa)). 4 cysteine pairs are disulfide-bonded: Cys-12–Cys-63, Cys-16–Cys-36, Cys-22–Cys-46, and Cys-26–Cys-48.

This sequence belongs to the long (4 C-C) scorpion toxin superfamily. Sodium channel inhibitor family. Alpha subfamily. Expressed by the venom gland.

The protein localises to the secreted. In terms of biological role, alpha toxins bind voltage-independently at site-3 of sodium channels (Nav) and inhibit the inactivation of the activated channels, thereby blocking neuronal transmission. This acidic toxin has a weak toxicity and is active against mammals. This chain is Alpha-mammal toxin BmK-M8, found in Olivierus martensii (Manchurian scorpion).